We begin with the raw amino-acid sequence, 512 residues long: Zinc metalloprotease mde10 (512 aa).

Positions 1–15 are cleaved as a signal peptide; it reads MRLVLLFSCVLAVSS. N-linked (GlcNAc...) asparagine glycosylation is present at Asn35. Positions 65 to 306 constitute a Peptidase M12B domain; that stretch reads QTLWIGVVAD…KYVSLSCLSK (242 aa). Zn(2+) is bound at residue His229. The active site involves Glu230. Residues His233 and His239 each coordinate Zn(2+). Disulfide bonds link Cys246/Cys254 and Cys374/Cys394. The 88-residue stretch at 315-402 folds into the Disintegrin domain; the sequence is LGTCGNGIVE…KCPVDENWDD (88 aa). Asn432 carries N-linked (GlcNAc...) asparagine glycosylation.

The cofactor is Zn(2+). Glycosylated.

The protein resides in the endoplasmic reticulum. It is found in the spore wall. Its function is as follows. Has a role in the development of the spore envelope. The sequence is that of Zinc metalloprotease mde10 (mde10) from Schizosaccharomyces pombe (strain 972 / ATCC 24843) (Fission yeast).